The chain runs to 268 residues: 4-hydroxy-tetrahydrodipicolinate reductase (268 aa).

NAD(+) is bound by residues 8–13 (GACGKM), D34, 95–97 (GTT), and 121–124 (APNF). H151 (proton donor/acceptor) is an active-site residue. Residue H152 participates in (S)-2,3,4,5-tetrahydrodipicolinate binding. Catalysis depends on K155, which acts as the Proton donor. A (S)-2,3,4,5-tetrahydrodipicolinate-binding site is contributed by 161–162 (GT).

Belongs to the DapB family.

It is found in the cytoplasm. It carries out the reaction (S)-2,3,4,5-tetrahydrodipicolinate + NAD(+) + H2O = (2S,4S)-4-hydroxy-2,3,4,5-tetrahydrodipicolinate + NADH + H(+). The enzyme catalyses (S)-2,3,4,5-tetrahydrodipicolinate + NADP(+) + H2O = (2S,4S)-4-hydroxy-2,3,4,5-tetrahydrodipicolinate + NADPH + H(+). It functions in the pathway amino-acid biosynthesis; L-lysine biosynthesis via DAP pathway; (S)-tetrahydrodipicolinate from L-aspartate: step 4/4. In terms of biological role, catalyzes the conversion of 4-hydroxy-tetrahydrodipicolinate (HTPA) to tetrahydrodipicolinate. This chain is 4-hydroxy-tetrahydrodipicolinate reductase, found in Dictyoglomus turgidum (strain DSM 6724 / Z-1310).